Reading from the N-terminus, the 227-residue chain is AN1-type zinc finger protein 3 (227 aa).

An A20-type zinc finger spans residues 12-44 (PSLPPRCPCGFWGSSKTMNLCSKCFADFQKKQP). The Zn(2+) site is built by Cys18, Cys20, Cys32, and Cys35. Disordered regions lie at residues 41 to 100 (KKQP…EECG) and 113 to 148 (PTKR…ETSR). Positions 49-59 (APSTSNSQSDL) are enriched in polar residues. Positions 66 to 77 (SDNNNTSITTPT) are enriched in low complexity. Polar residues-rich tracts occupy residues 78–94 (LSPS…VTSP) and 113–127 (PTKR…SENE). The span at 135 to 148 (RLLENTERSEETSR) shows a compositional bias: basic and acidic residues. Residues 151–200 (QKSRRRCFQCQTKLELVQQELGSCRCGYVFCMLHRLPEQHDCTFDHMGRG) form an AN1-type zinc finger. Zn(2+) contacts are provided by Cys157, Cys160, Cys174, Cys176, Cys181, His184, His190, and Cys192.

The chain is AN1-type zinc finger protein 3 (ZFAND3) from Homo sapiens (Human).